A 346-amino-acid chain; its full sequence is Phosphoribosylformylglycinamidine cyclo-ligase (346 aa).

This sequence belongs to the AIR synthase family.

Its subcellular location is the cytoplasm. The enzyme catalyses 2-formamido-N(1)-(5-O-phospho-beta-D-ribosyl)acetamidine + ATP = 5-amino-1-(5-phospho-beta-D-ribosyl)imidazole + ADP + phosphate + H(+). The protein operates within purine metabolism; IMP biosynthesis via de novo pathway; 5-amino-1-(5-phospho-D-ribosyl)imidazole from N(2)-formyl-N(1)-(5-phospho-D-ribosyl)glycinamide: step 2/2. This is Phosphoribosylformylglycinamidine cyclo-ligase from Bacillus thuringiensis subsp. konkukian (strain 97-27).